The sequence spans 313 residues: E3 ubiquitin-protein ligase SINA-like 2 (313 aa).

The tract at residues 1-26 is disordered; the sequence is MSGEASTSRRKRQRVPSSVESVENGG. The RING-type zinc finger occupies 44 to 80; that stretch reads CPICCHALTSPIFQCDNGHIACSSCCTKLRNKCPSCA. An SBD region spans residues 94–277; that stretch reads VVEAVMVTCP…LKMEICIRKL (184 aa). The SIAH-type zinc-finger motif lies at 97-155; sequence AVMVTCPNVKHGCTEKFSYGKELIHEKDCRFALCYCPAPNCNYSGVYKDLYSHFYVNHY. Zn(2+)-binding residues include C102, C109, H121, C125, C132, C137, H149, and H154. The disordered stretch occupies residues 278–313; sequence KKDEEEADEDEESEEEEDDDDDDDDDDEEEDADEEE. The span at 282 to 313 shows a compositional bias: acidic residues; it reads EEADEDEESEEEEDDDDDDDDDDEEEDADEEE.

Belongs to the SINA (Seven in absentia) family.

It catalyses the reaction S-ubiquitinyl-[E2 ubiquitin-conjugating enzyme]-L-cysteine + [acceptor protein]-L-lysine = [E2 ubiquitin-conjugating enzyme]-L-cysteine + N(6)-ubiquitinyl-[acceptor protein]-L-lysine.. It functions in the pathway protein modification; protein ubiquitination. In terms of biological role, E3 ubiquitin-protein ligase that mediates ubiquitination and subsequent proteasomal degradation of target proteins. E3 ubiquitin ligases accept ubiquitin from an E2 ubiquitin-conjugating enzyme in the form of a thioester and then directly transfers the ubiquitin to targeted substrates. It probably triggers the ubiquitin-mediated degradation of different substrates. The polypeptide is E3 ubiquitin-protein ligase SINA-like 2 (Arabidopsis thaliana (Mouse-ear cress)).